A 105-amino-acid polypeptide reads, in one-letter code: MANRIKKGDQVVINTGKDKGKQGEVLRVDGDRVIVSNANLIKRHTKPNPQAGVAGGVVEREASIHISNVNIVNPATGKGERVGFKVLEDGRKLRVFRSSGEALDA.

It belongs to the universal ribosomal protein uL24 family. In terms of assembly, part of the 50S ribosomal subunit.

Functionally, one of two assembly initiator proteins, it binds directly to the 5'-end of the 23S rRNA, where it nucleates assembly of the 50S subunit. In terms of biological role, one of the proteins that surrounds the polypeptide exit tunnel on the outside of the subunit. This Xanthomonas oryzae pv. oryzae (strain PXO99A) protein is Large ribosomal subunit protein uL24.